The chain runs to 416 residues: Serine hydroxymethyltransferase (416 aa).

(6S)-5,6,7,8-tetrahydrofolate-binding positions include Leu121 and 125 to 127 (GHL). Lys230 is modified (N6-(pyridoxal phosphate)lysine). Residue 355 to 357 (SPF) participates in (6S)-5,6,7,8-tetrahydrofolate binding.

This sequence belongs to the SHMT family. As to quaternary structure, homodimer. The cofactor is pyridoxal 5'-phosphate.

It is found in the cytoplasm. The catalysed reaction is (6R)-5,10-methylene-5,6,7,8-tetrahydrofolate + glycine + H2O = (6S)-5,6,7,8-tetrahydrofolate + L-serine. It functions in the pathway one-carbon metabolism; tetrahydrofolate interconversion. Its pathway is amino-acid biosynthesis; glycine biosynthesis; glycine from L-serine: step 1/1. Its function is as follows. Catalyzes the reversible interconversion of serine and glycine with tetrahydrofolate (THF) serving as the one-carbon carrier. This reaction serves as the major source of one-carbon groups required for the biosynthesis of purines, thymidylate, methionine, and other important biomolecules. Also exhibits THF-independent aldolase activity toward beta-hydroxyamino acids, producing glycine and aldehydes, via a retro-aldol mechanism. This Streptococcus thermophilus (strain CNRZ 1066) protein is Serine hydroxymethyltransferase.